Reading from the N-terminus, the 516-residue chain is MAPFALLSVSDKNGVVALAEALHRTHGYALLSSGGTAKVLEDAGLPVTRMSEHNGAPEILGGRVKTLHPRVHGGILAKRGDAAHQADLEQQGIPAIDLVVVNLYPFRETVARADVTWDQAIENIDIGGPAMVRAAAKNHADVAVLTSPDQYSSVLAAMAESAGRVPADLCRQLALEAFQHTAAYDTAISRWMAGEVELVSSPWLEAVPLRQTLRYGENPHQKARWFSHPRQGWGGAIQLQGKELSTNNLLDLEAALATVREFGYGPNAVGPAAVVVKHTNPCGVAVGPVVASALTRALDADRVSAFGGIVAINGPVEAAAARELTGLFLECVVAPSFSPEAREILAAKANLRLLELSPDAIAAAGPDHVRSILGGLLVQDLDDQVMTPDQWTLATKRPPTAQEKQDLEFAWRLVRHVRSNAIVVARDGQSLGVGAGQMNRVGSARIALEAAAEKAKGAVLASDGFFPFDDTVRLAASHGITAVIHPGGSLRDGESVKACDELGLAMLLTGRRHFLH.

The MGS-like domain occupies methionine 1 to threonine 146.

The protein belongs to the PurH family.

The catalysed reaction is (6R)-10-formyltetrahydrofolate + 5-amino-1-(5-phospho-beta-D-ribosyl)imidazole-4-carboxamide = 5-formamido-1-(5-phospho-D-ribosyl)imidazole-4-carboxamide + (6S)-5,6,7,8-tetrahydrofolate. It carries out the reaction IMP + H2O = 5-formamido-1-(5-phospho-D-ribosyl)imidazole-4-carboxamide. It participates in purine metabolism; IMP biosynthesis via de novo pathway; 5-formamido-1-(5-phospho-D-ribosyl)imidazole-4-carboxamide from 5-amino-1-(5-phospho-D-ribosyl)imidazole-4-carboxamide (10-formyl THF route): step 1/1. The protein operates within purine metabolism; IMP biosynthesis via de novo pathway; IMP from 5-formamido-1-(5-phospho-D-ribosyl)imidazole-4-carboxamide: step 1/1. The protein is Bifunctional purine biosynthesis protein PurH of Parasynechococcus marenigrum (strain WH8102).